The primary structure comprises 500 residues: Neuronal acetylcholine receptor subunit beta-2 (500 aa).

An N-terminal signal peptide occupies residues 1–24; it reads MAGHSNSMALFSFSLLWLCSGVLG. Residues 25–237 lie on the Extracellular side of the membrane; the sequence is TDTEERLVEH…IIRRKPLFYT (213 aa). Asn50 and Asn167 each carry an N-linked (GlcNAc...) asparagine glycan. Cys154 and Cys168 are oxidised to a cystine. The chain crosses the membrane as a helical span at residues 238–258; that stretch reads INLIIPCVLITSLAILVFYLP. The Cytoplasmic segment spans residues 259-266; that stretch reads SDCGEKMT. Residues 267 to 287 form a helical membrane-spanning segment; sequence LCISVLLALTVFLLLISKIVP. The Extracellular segment spans residues 288–299; it reads PTSLDVPLVGKY. Residues 300–320 traverse the membrane as a helical segment; the sequence is LMFTMVLVTFSIVTSVCVLNV. Residues 321 to 458 are Cytoplasmic-facing; it reads HHRSPTTHTM…WKYVAMVIDR (138 aa). A helical membrane pass occupies residues 459–479; the sequence is LFLWIFVFVCVFGTVGMFLQP.

This sequence belongs to the ligand-gated ion channel (TC 1.A.9) family. Acetylcholine receptor (TC 1.A.9.1) subfamily. Beta-2/CHRNB2 sub-subfamily. In terms of assembly, neuronal AChR is a heteropentamer composed of two different types of subunits: alpha and beta. CHRNB2/Beta-2 subunit can be combined to CHRNA2/alpha-2, CHRNA3/alpha-3 or CHRNA4/alpha-4, CHRNA5/alpha-5, CHRNA6/alpha-6 and CHRNB3/beta-3 to give rise to functional receptors. CHRNA2:CHRNB2 and CHRNA4:CHRNB2 nAChR complexes exist in two subtypes: LS (low agonist sensitivity) with a (CHRNA2/4)3:(CHRNB2)2 and HS (high agonist sensitivity) with a (CHRNA2/4)2:(CHRNB2)3 stoichiometry; the subtypes differ in their subunit binding interfaces which are involved in ligand binding. Cells produce predominantly an (CHRNA4)3:(CHRNB2)2 nAChR. The stoichiometric form (CHRNA4)2:(CHRNB2)3 expression is selectively up-regulated by nicotine and has lower single channel conductance and calcium permeability. Also part of the stoichiometric forms: (CHRNA4:CHRNB2)2:CHRNB3 or (CHRNA6:CHRNB2)2:CHRNB3. Can form heteropentamers with CHRNA7, mainly found in basal forebrain cholinergic neurons. Interacts with RIC3; which is required for proper folding and assembly. Interacts with LYPD6. In terms of tissue distribution, expressed in most regions of the CNS.

The protein localises to the synaptic cell membrane. It localises to the cell membrane. It carries out the reaction Ca(2+)(in) = Ca(2+)(out). The enzyme catalyses K(+)(in) = K(+)(out). It catalyses the reaction Na(+)(in) = Na(+)(out). Activated by a myriad of ligands such as acetylcholine, cytisine, nicotine, choline and epibatidine. Channel potentiation by calcium is stoichiometry-selective, CHRNA4:CHRNB2 nACh receptor is achieved by calcium association with topographically distinct sites framed by anionic residues within the CHRNA4 subunit and between the CHRNA4 and CHRNB2 subunits. Oligomeric amyloid-beta protein 42 activates specifially CHRNA7:CHRNB2 nAchRs. nAChR activity is inhibited by the antagonist alpha-conotoxins BuIA, PnIA, PnIC, GID and MII, small disulfide-constrained peptides from cone snails. In terms of biological role, component of neuronal acetylcholine receptors (nAChRs) that function as pentameric, ligand-gated cation channels with high calcium permeability among other activities. nAChRs are excitatory neurotrasnmitter receptors formed by a collection of nAChR subunits known to mediate synaptic transmission in the nervous system and the neuromuscular junction. Each nAchR subunit confers differential attributes to channel properties, including activation, deactivation and desensitization kinetics, pH sensitivity, cation permeability, and binding to allosteric modulators. CHRNB2 forms heteropentameric neuronal acetylcholine receptors with CHRNA2, CHRNA3, CHRNA4 and CHRNA6, as well as CHRNA5 and CHRNB3 as accesory subunits. Found in two major stoichiometric forms,(CHRNA4)3:(CHRNB2)2 and (CHRNA4)2:(CHRNB2)3, the two stoichiometric forms differ in their unitary conductance, calcium permeability, ACh sensitivity and potentiation by divalent cation. Heteropentameric channels with CHRNA6 and CHRNA4 exhibit high sensitivity to ACh and nicotine and are predominantly expressed in only a few brain areas, including dopaminergic neurons, norepirephrine neurons and cells of the visual system. nAChrs containing CHRNA6 subunits mediate endogenous cholinergic modulation of dopamine and gamma-aminobutyric acid (GABA) release in response to nicotine at nerve terminals. Also forms functional nAChRs with other subunits such as CHRNA7:CHRNB2, mainly expressed in basal forebrain cholinergic neurons. This chain is Neuronal acetylcholine receptor subunit beta-2 (Chrnb2), found in Rattus norvegicus (Rat).